Consider the following 107-residue polypeptide: Serine palmitoyltransferase-regulating protein TSC3 (107 aa).

Residues 72–92 form a helical membrane-spanning segment; sequence VFFLVVFTLSLFGLLKWVLSL.

The protein resides in the endoplasmic reticulum membrane. Its function is as follows. Stimulates the activity of serine palmitoyltransferase (SPT). In Eremothecium gossypii (strain ATCC 10895 / CBS 109.51 / FGSC 9923 / NRRL Y-1056) (Yeast), this protein is Serine palmitoyltransferase-regulating protein TSC3 (TSC3).